The following is a 340-amino-acid chain: Immunoglobulin-binding protein 1 (340 aa).

Positions L47–D61 constitute a UIM domain. The interval R99–A203 is interaction with PPP2CA. Disordered stretches follow at residues D223–K242 and S291–G340. Positions R226–S291 are interaction with MID1. Position 242 is an N6-acetyllysine (K242). The span at A292 to Q301 shows a compositional bias: low complexity. The span at E302 to E312 shows a compositional bias: acidic residues. The span at E313–P330 shows a compositional bias: basic and acidic residues.

It belongs to the IGBP1/TAP42 family. In terms of assembly, interacts with PPP2CB, and with PP4 and PP6. Interacts with MID2. Interacts with ubiquitin. Interacts with partially folded PPP2CA, but not with the fully active protein. Interacts with MID1. Post-translationally, phosphorylated. In terms of processing, monoubiquitination by MID1 triggers calpain-mediated cleavage and switches IGBP1 activity from protective to destructive. Expressed in spleen, thymus, liver and brain. Ubiquitously expressed in B lineage cell lines.

It localises to the cytoplasm. In terms of biological role, associated to surface IgM-receptor; may be involved in signal transduction. Involved in regulation of the catalytic activity of the phosphatases PP2A, PP4 and PP6 by protecting their partially folded catalytic subunits from degradative polyubiquitination until they associate with regulatory subunits. The protein is Immunoglobulin-binding protein 1 (Igbp1) of Mus musculus (Mouse).